The sequence spans 941 residues: Isoleucine--tRNA ligase (941 aa).

The 'HIGH' region signature appears at 59-69 (PYANGNIHIGH). Glutamate 562 contributes to the L-isoleucyl-5'-AMP binding site. The 'KMSKS' region motif lies at 603–607 (KMSKS). Residue lysine 606 participates in ATP binding. Cysteine 904, cysteine 907, cysteine 924, and cysteine 927 together coordinate Zn(2+).

Belongs to the class-I aminoacyl-tRNA synthetase family. IleS type 1 subfamily. In terms of assembly, monomer. It depends on Zn(2+) as a cofactor.

It localises to the cytoplasm. It carries out the reaction tRNA(Ile) + L-isoleucine + ATP = L-isoleucyl-tRNA(Ile) + AMP + diphosphate. In terms of biological role, catalyzes the attachment of isoleucine to tRNA(Ile). As IleRS can inadvertently accommodate and process structurally similar amino acids such as valine, to avoid such errors it has two additional distinct tRNA(Ile)-dependent editing activities. One activity is designated as 'pretransfer' editing and involves the hydrolysis of activated Val-AMP. The other activity is designated 'posttransfer' editing and involves deacylation of mischarged Val-tRNA(Ile). The polypeptide is Isoleucine--tRNA ligase (Haemophilus influenzae (strain PittGG)).